Reading from the N-terminus, the 430-residue chain is 5-methylthioadenosine/S-adenosylhomocysteine deaminase (430 aa).

Zn(2+) contacts are provided by H59 and H61. The substrate site is built by E88 and H181. Residue H208 coordinates Zn(2+). Substrate is bound by residues E211 and D296. D296 provides a ligand contact to Zn(2+).

The protein belongs to the metallo-dependent hydrolases superfamily. MTA/SAH deaminase family. Zn(2+) serves as cofactor.

It carries out the reaction S-adenosyl-L-homocysteine + H2O + H(+) = S-inosyl-L-homocysteine + NH4(+). The enzyme catalyses S-methyl-5'-thioadenosine + H2O + H(+) = S-methyl-5'-thioinosine + NH4(+). Its function is as follows. Catalyzes the deamination of 5-methylthioadenosine and S-adenosyl-L-homocysteine into 5-methylthioinosine and S-inosyl-L-homocysteine, respectively. Is also able to deaminate adenosine. The chain is 5-methylthioadenosine/S-adenosylhomocysteine deaminase from Aquifex aeolicus (strain VF5).